Here is a 341-residue protein sequence, read N- to C-terminus: Thymidine kinase (341 aa).

An ATP-binding site is contributed by 19–26 (GAYGIGKT). Glutamate 48 functions as the Proton acceptor in the catalytic mechanism. Substrate is bound by residues tyrosine 66 and glutamine 90. Residue arginine 183 coordinates ATP. Substrate is bound at residue arginine 189.

This sequence belongs to the herpesviridae thymidine kinase family. In terms of assembly, homodimer.

It carries out the reaction thymidine + ATP = dTMP + ADP + H(+). Catalyzes the transfer of the gamma-phospho group of ATP to thymidine to generate dTMP in the salvage pathway of pyrimidine synthesis. The dTMP serves as a substrate for DNA polymerase during viral DNA replication. Allows the virus to be reactivated and to grow in non-proliferative cells lacking a high concentration of phosphorylated nucleic acid precursors. This Varicella-zoster virus (strain Oka vaccine) (HHV-3) protein is Thymidine kinase.